We begin with the raw amino-acid sequence, 292 residues long: Peroxisomal 2,4-dienoyl-CoA reductase [(3E)-enoyl-CoA-producing] (292 aa).

NADP(+)-binding positions include 35 to 40 (GGGSGI), 60 to 64 (RSLPR), and Asp-86. Arg-60 contacts substrate. Substrate-binding positions include Arg-88, Phe-118, and 126–128 (SFN). Position 151 is an N6-acetyllysine (Lys-151). Residues Lys-182 and 208 to 214 (PGAISGT) each bind NADP(+). Arg-219 lines the substrate pocket. Ser-287 bears the Phosphoserine mark. Residues 290–292 (AKL) carry the Microbody targeting signal motif. An N6-acetyllysine modification is found at Lys-291.

This sequence belongs to the short-chain dehydrogenases/reductases (SDR) family. 2,4-dienoyl-CoA reductase subfamily. Monomer, dimer and oligomer.

Its subcellular location is the peroxisome. The enzyme catalyses a (2E,4Z)-dienoyl-CoA + NADPH + H(+) = a 4,5-saturated-(3E)-enoyl-CoA + NADP(+). The catalysed reaction is a (2E,4E)-dienoyl-CoA + NADPH + H(+) = a 4,5-saturated-(3E)-enoyl-CoA + NADP(+). It carries out the reaction (2E,4E)-hexadienoyl-CoA + NADPH + H(+) = (3E)-hexenoyl-CoA + NADP(+). It catalyses the reaction (2E,4E)-decadienoyl-CoA + NADPH + H(+) = (3E)-decenoyl-CoA + NADP(+). The enzyme catalyses (2E,4Z,7Z,10Z,13Z,16Z,19Z)-docosaheptaenoyl-CoA + NADPH + H(+) = (3E,7Z,10Z,13Z,16Z,19Z)-docosahexaenoyl-CoA + NADP(+). Its function is as follows. Auxiliary enzyme of beta-oxidation. Participates in the degradation of unsaturated fatty enoyl-CoA esters having double bonds in both even- and odd-numbered positions in peroxisome. Catalyzes the NADP-dependent reduction of 2,4-dienoyl-CoA to yield trans-3-enoyl-CoA. Has activity towards short and medium chain 2,4-dienoyl-CoAs, but also towards 2,4,7,10,13,16,19-docosaheptaenoyl-CoA, suggesting that it does not constitute a rate limiting step in the peroxisomal degradation of docosahexaenoic acid. The chain is Peroxisomal 2,4-dienoyl-CoA reductase [(3E)-enoyl-CoA-producing] (Decr2) from Rattus norvegicus (Rat).